The primary structure comprises 267 residues: MYYIVASDLDGTLLSPQFYLTEYTKKIIKRLVNKGIYFVIATGRHYNEAKEIQKMLNVPVFLITSNGARIYDLNKKLIYSCDIEQKVVKELLQKCLLNHDILIQLYSHNNWYVSNNNYSASSLYVSFSFRSKIFEFKTIIKKKISKIFFTCKNVKKLLCLEKYIISHWGKYVNVSFSFLNCLEIMSKTVSKGNSLQLIANMLGLSIKNCISFGDGMNDKEMLDMSGKGCMMDNSHYLLKKSLPNLEIIGSNKFDSVAMYLNKIYFKK.

Asp8 (nucleophile) is an active-site residue. A Mg(2+)-binding site is contributed by Asp8. Leu9 is a phosphate binding site. Asp10 serves as a coordination point for Mg(2+). Phosphate is bound by residues 42–43 and Lys191; that span reads TG. Asp214 serves as a coordination point for Mg(2+). Asn217 provides a ligand contact to phosphate.

Belongs to the HAD-like hydrolase superfamily. Cof family. Mg(2+) serves as cofactor.

The protein is Putative phosphatase bbp_030 of Buchnera aphidicola subsp. Baizongia pistaciae (strain Bp).